The primary structure comprises 534 residues: NEDD8-activating enzyme E1 regulatory subunit (534 aa).

N-acetylalanine is present on Ala-2. An N6-acetyllysine mark is found at Lys-6 and Lys-341. Positions 331–344 are interaction with UBA3; sequence DMIADSGKYIKLQN.

Belongs to the ubiquitin-activating E1 family. ULA1 subfamily. In terms of assembly, heterodimer of UBA3 and NAE1. The complex binds NEDD8 and UBE2M. Binds APP and TP53BP2. Post-translationally, ubiquitinated by TRIP12, leading to its degradation by the proteasome. In terms of tissue distribution, ubiquitous in fetal tissues. Expressed throughout the adult brain.

The protein resides in the cell membrane. It participates in protein modification; protein neddylation. Binding of TP53BP2 to the regulatory subunit NAE1 decreases neddylation activity. Functionally, regulatory subunit of the dimeric UBA3-NAE1 E1 enzyme. E1 activates NEDD8 by first adenylating its C-terminal glycine residue with ATP, thereafter linking this residue to the side chain of the catalytic cysteine, yielding a NEDD8-UBA3 thioester and free AMP. E1 finally transfers NEDD8 to the catalytic cysteine of UBE2M. Necessary for cell cycle progression through the S-M checkpoint. Overexpression of NAE1 causes apoptosis through deregulation of NEDD8 conjugation. The covalent attachment of NEDD8 to target proteins is known as 'neddylation' and the process is involved in the regulation of cell growth, viability and development. This chain is NEDD8-activating enzyme E1 regulatory subunit (NAE1), found in Homo sapiens (Human).